Consider the following 99-residue polypeptide: Integration host factor subunit alpha (99 aa).

The interval 52–73 (FGNFTLRDKPQRPGRNPKTGEE) is disordered.

It belongs to the bacterial histone-like protein family. In terms of assembly, heterodimer of an alpha and a beta chain.

Its function is as follows. This protein is one of the two subunits of integration host factor, a specific DNA-binding protein that functions in genetic recombination as well as in transcriptional and translational control. The polypeptide is Integration host factor subunit alpha (Legionella pneumophila subsp. pneumophila (strain Philadelphia 1 / ATCC 33152 / DSM 7513)).